The primary structure comprises 347 residues: Holliday junction branch migration complex subunit RuvB (347 aa).

Residues 1–180 (MTSRVVSPEQ…FGIPCRMNFY (180 aa)) are large ATPase domain (RuvB-L). ATP contacts are provided by residues L19, R20, G61, K64, T65, T66, 127–129 (EDF), R170, Y180, and R217. T65 lines the Mg(2+) pocket. Positions 181–251 (EPAELEAIVS…VADAALNRLE (71 aa)) are small ATPAse domain (RuvB-S). Residues 254-347 (RIGLDAMDRR…LLTRMDEEGE (94 aa)) form a head domain (RuvB-H) region. Positions 290, 309, and 314 each coordinate DNA.

It belongs to the RuvB family. Homohexamer. Forms an RuvA(8)-RuvB(12)-Holliday junction (HJ) complex. HJ DNA is sandwiched between 2 RuvA tetramers; dsDNA enters through RuvA and exits via RuvB. An RuvB hexamer assembles on each DNA strand where it exits the tetramer. Each RuvB hexamer is contacted by two RuvA subunits (via domain III) on 2 adjacent RuvB subunits; this complex drives branch migration. In the full resolvosome a probable DNA-RuvA(4)-RuvB(12)-RuvC(2) complex forms which resolves the HJ.

It is found in the cytoplasm. It catalyses the reaction ATP + H2O = ADP + phosphate + H(+). Functionally, the RuvA-RuvB-RuvC complex processes Holliday junction (HJ) DNA during genetic recombination and DNA repair, while the RuvA-RuvB complex plays an important role in the rescue of blocked DNA replication forks via replication fork reversal (RFR). RuvA specifically binds to HJ cruciform DNA, conferring on it an open structure. The RuvB hexamer acts as an ATP-dependent pump, pulling dsDNA into and through the RuvAB complex. RuvB forms 2 homohexamers on either side of HJ DNA bound by 1 or 2 RuvA tetramers; 4 subunits per hexamer contact DNA at a time. Coordinated motions by a converter formed by DNA-disengaged RuvB subunits stimulates ATP hydrolysis and nucleotide exchange. Immobilization of the converter enables RuvB to convert the ATP-contained energy into a lever motion, pulling 2 nucleotides of DNA out of the RuvA tetramer per ATP hydrolyzed, thus driving DNA branch migration. The RuvB motors rotate together with the DNA substrate, which together with the progressing nucleotide cycle form the mechanistic basis for DNA recombination by continuous HJ branch migration. Branch migration allows RuvC to scan DNA until it finds its consensus sequence, where it cleaves and resolves cruciform DNA. In Paramagnetospirillum magneticum (strain ATCC 700264 / AMB-1) (Magnetospirillum magneticum), this protein is Holliday junction branch migration complex subunit RuvB.